The primary structure comprises 275 residues: Protein unc-50 homolog (275 aa).

Residues 1–26 (MTQYSHVKYTQSPTPSVVSGYSSASR) are compositionally biased toward polar residues. The interval 1–39 (MTQYSHVKYTQSPTPSVVSGYSSASRLHSPLPPPANHRR) is disordered. Topologically, residues 1-99 (MTQYSHVKYT…TKSQFARDDP (99 aa)) are cytoplasmic. A helical membrane pass occupies residues 100-120 (AFLVLLVVCLCVTSLGFAYVL). At 121 to 129 (GLSFWQSIS) the chain is on the lumenal side. Residues 130 to 150 (FIFYVVFVDCIFVGIIIASFF) form a helical membrane-spanning segment. Topologically, residues 151–178 (WAVTNRYLRTNSLEPDIEWGYAFDVHLN) are cytoplasmic. A helical transmembrane segment spans residues 179 to 199 (AFFPPLMLLHFIQLFFYNWLI). Residues 200-207 (SQTWFISR) are Lumenal-facing. Residues 208–228 (FLGNTFWLMGMGYYVYITFLG) form a helical membrane-spanning segment. The Cytoplasmic portion of the chain corresponds to 229 to 239 (YNCIPHLKNTR). The chain crosses the membrane as a helical span at residues 240–260 (IILIALPIIFLLFLVVTIIGW). The Lumenal portion of the chain corresponds to 261-275 (NATISFVNFYKYRVY).

This sequence belongs to the unc-50 family.

The protein localises to the golgi apparatus membrane. In terms of biological role, required for cell surface expression of acetylcholine receptors. This chain is Protein unc-50 homolog, found in Drosophila melanogaster (Fruit fly).